A 720-amino-acid chain; its full sequence is Fatty acid CoA ligase Acsl3 (720 aa).

The chain crosses the membrane as a helical; Signal-anchor for type III membrane protein span at residues 21–41; sequence ILLYFIHFLISLYTILTYIPF. At 42-720 the chain is on the cytoplasmic side; that stretch reads YFFSESRQEK…ADIERMYGRK (679 aa). Ser-683 is subject to Phosphoserine.

This sequence belongs to the ATP-dependent AMP-binding enzyme family. Mg(2+) serves as cofactor.

The protein localises to the mitochondrion outer membrane. The protein resides in the peroxisome membrane. It localises to the microsome membrane. It is found in the endoplasmic reticulum membrane. It catalyses the reaction a long-chain fatty acid + ATP + CoA = a long-chain fatty acyl-CoA + AMP + diphosphate. The enzyme catalyses (5Z,8Z,11Z,14Z)-eicosatetraenoate + ATP + CoA = (5Z,8Z,11Z,14Z)-eicosatetraenoyl-CoA + AMP + diphosphate. The catalysed reaction is (E)-hexadec-2-enoate + ATP + CoA = (2E)-hexadecenoyl-CoA + AMP + diphosphate. It carries out the reaction 15-hydroxy-(5Z,8Z,11Z,13E)-eicosatetraenoate + ATP + CoA = 15-hydroxy-(5Z,8Z,11Z,13E)-eicosatetraenoyl-CoA + AMP + diphosphate. It catalyses the reaction 12-hydroxy-(5Z,8Z,10E,14Z)-eicosatetraenoate + ATP + CoA = 12-hydroxy-(5Z,8Z,10E,14Z)-eicosatetraenoyl-CoA + AMP + diphosphate. The enzyme catalyses 5-hydroxy-(6E,8Z,11Z,14Z)-eicosatetraenoate + ATP + CoA = 5-hydroxy-(6E,8Z,11Z,14Z)-eicosatetraenoyl-CoA + AMP + diphosphate. The catalysed reaction is 14,15-epoxy-(5Z,8Z,11Z)-eicosatrienoate + ATP + CoA = 14,15-epoxy-(5Z,8Z,11Z)-eicosatrienoyl-CoA + AMP + diphosphate. It carries out the reaction 11,12-epoxy-(5Z,8Z,14Z)-eicosatrienoate + ATP + CoA = 11,12-epoxy-(5Z,8Z,14Z)-eicosatrienoyl-CoA + AMP + diphosphate. It catalyses the reaction a medium-chain fatty acid + ATP + CoA = a medium-chain fatty acyl-CoA + AMP + diphosphate. The enzyme catalyses hexadecanoate + ATP + CoA = hexadecanoyl-CoA + AMP + diphosphate. The catalysed reaction is tetradecanoate + ATP + CoA = tetradecanoyl-CoA + AMP + diphosphate. It carries out the reaction dodecanoate + ATP + CoA = dodecanoyl-CoA + AMP + diphosphate. It catalyses the reaction octadecanoate + ATP + CoA = octadecanoyl-CoA + AMP + diphosphate. The enzyme catalyses eicosanoate + ATP + CoA = eicosanoyl-CoA + AMP + diphosphate. The catalysed reaction is (9Z)-octadecenoate + ATP + CoA = (9Z)-octadecenoyl-CoA + AMP + diphosphate. It carries out the reaction (9Z)-hexadecenoate + ATP + CoA = (9Z)-hexadecenoyl-CoA + AMP + diphosphate. It catalyses the reaction (9Z,12Z)-octadecadienoate + ATP + CoA = (9Z,12Z)-octadecadienoyl-CoA + AMP + diphosphate. The enzyme catalyses (9Z,12Z,15Z)-octadecatrienoate + ATP + CoA = (9Z,12Z,15Z)-octadecatrienoyl-CoA + AMP + diphosphate. The catalysed reaction is (4Z,7Z,10Z,13Z,16Z,19Z)-docosahexaenoate + ATP + CoA = (4Z,7Z,10Z,13Z,16Z,19Z)-docosahexaenoyl-CoA + AMP + diphosphate. It carries out the reaction (5Z,8Z,11Z,14Z,17Z)-eicosapentaenoate + ATP + CoA = (5Z,8Z,11Z,14Z,17Z)-eicosapentaenoyl-CoA + AMP + diphosphate. It catalyses the reaction a fatty acid + ATP + CoA = a fatty acyl-CoA + AMP + diphosphate. In terms of biological role, acyl-CoA synthetases (ACSL) activates long-chain fatty acids for both synthesis of cellular lipids, and degradation via beta-oxidation. Required for the incorporation of fatty acids into phosphatidylcholine, the major phospholipid located on the surface of VLDL (very low density lipoproteins). Has mainly an anabolic role in energy metabolism. Mediates hepatic lipogenesis. Preferentially uses myristate, laurate, arachidonate and eicosapentaenoate as substrates. Both isoforms exhibit the same level of activity. This chain is Fatty acid CoA ligase Acsl3, found in Homo sapiens (Human).